Consider the following 1904-residue polypeptide: Fatty acid synthase beta subunit hexB (1904 aa).

An acetyltransferase (AT) domain region spans residues 24–395 (LSVAFGGQGP…TEGTGVRVIQ (372 aa)). Positions 447–691 (TQLLNAPPVM…LIVQTEGVGD (245 aa)) are enoyl reductase (ER) domain. Residues 1001–1491 (GPAADCWTHH…RPNDRLKIQL (491 aa)) form a dehydratase (DH) domain region. A MaoC-like domain is found at 1399–1512 (PGWNEGSTVL…MKVQAFNDET (114 aa)). The tract at residues 1530-1893 (YVFCGQGSQE…IEHVQSVTGS (364 aa)) is malonyl/palmitoyl transferase (MT/PT) domain.

This sequence belongs to the fungal fatty acid synthetase subunit beta family. As to quaternary structure, [Alpha(6)beta(6)] hexamers of two multifunctional subunits (alpha and beta).

It carries out the reaction acetyl-CoA + n malonyl-CoA + 2n NADPH + 4n H(+) = a long-chain-acyl-CoA + n CoA + n CO2 + 2n NADP(+).. The enzyme catalyses holo-[ACP] + acetyl-CoA = acetyl-[ACP] + CoA. The catalysed reaction is holo-[ACP] + malonyl-CoA = malonyl-[ACP] + CoA. It catalyses the reaction a (3R)-hydroxyacyl-[ACP] = a (2E)-enoyl-[ACP] + H2O. It carries out the reaction a 2,3-saturated acyl-[ACP] + NAD(+) = a (2E)-enoyl-[ACP] + NADH + H(+). The enzyme catalyses (9Z)-octadecenoyl-[ACP] + H2O = (9Z)-octadecenoate + holo-[ACP] + H(+). It functions in the pathway mycotoxin biosynthesis. Functionally, fatty acid synthase beta subunit; part of the fragmented gene cluster that mediates the biosynthesis of dothistromin (DOTH), a polyketide toxin very similar in structure to the aflatoxin precursor, versicolorin B. The first step of the pathway is the conversion of acetate to norsolorinic acid (NOR) and requires the fatty acid synthase subunits hexA and hexB, as well as the polyketide synthase pksA. PksA combines a hexanoyl starter unit and 7 malonyl-CoA extender units to synthesize the precursor NOR. The hexanoyl starter unit is provided to the acyl-carrier protein (ACP) domain by the fungal fatty acid synthase hexA/hexB. The second step is the conversion of NOR to averantin (AVN) and requires the norsolorinic acid ketoreductase nor1, which catalyzes the dehydration of norsolorinic acid to form (1'S)-averantin. The cytochrome P450 monooxygenase avnA then catalyzes the hydroxylation of AVN to 5'hydroxyaverantin (HAVN). The next step is performed by adhA that transforms HAVN to averufin (AVF). Averufin might then be converted to hydroxyversicolorone by cypX and avfA. Hydroxyversicolorone is further converted versiconal hemiacetal acetate (VHA) by moxY. VHA is then the substrate for the versiconal hemiacetal acetate esterase est1 to yield versiconal (VAL). Versicolorin B synthase vbsA then converts VAL to versicolorin B (VERB) by closing the bisfuran ring. Then, the activity of the versicolorin B desaturase verB leads to versicolorin A (VERA). DotB, a predicted chloroperoxidase, may perform epoxidation of the A-ring of VERA. Alternatively, a cytochrome P450, such as cypX or avnA could catalyze this step. It is also possible that another, uncharacterized, cytochrome P450 enzyme is responsible for this step. Opening of the epoxide could potentially be achieved by the epoxide hydrolase epoA. However, epoA seems not to be required for DOTH biosynthesis, but other epoxide hydrolases may have the ability to complement this hydrolysis. Alternatively, opening of the epoxide ring could be achieved non-enzymatically. The next step is the deoxygenation of ring A to yield the 5,8-dihydroxyanthraquinone which is most likely catalyzed by the NADPH dehydrogenase encoded by ver1. The last stages of DOTH biosynthesis are proposed to involve hydroxylation of the bisfuran. OrdB and norB might have oxidative roles here. An alternative possibility is that cytochrome P450 monoogenases such as avnA and cypX might perform these steps in addition to previously proposed steps. The polypeptide is Fatty acid synthase beta subunit hexB (Dothistroma septosporum (strain NZE10 / CBS 128990) (Red band needle blight fungus)).